The chain runs to 256 residues: MRIVLGEIFGLKIYSYGFMIGLGIICATLLFLKRGTQRGYNEDKLFNATILTVISGILGGKILYIITEWKTVMQDPSLIFRDFGNGFVIYGAIIGGALGIALCSLKNKWNVLELADLVVPGLALAQGFGRIGCLLAGCCYGAETTSSIGIIFPADSLAPAGVPLYPTQIFSSIFDFALGLFLLWYGNKNKEKGKTMSMYMIIYSIGRFFVEFLRNDPRGSVGLLSTSQFISIFILIGGILLYNINKLKGRKETGEK.

Helical transmembrane passes span 11-31 (LKIYSYGFMIGLGIICATLLF), 46-66 (FNATILTVISGILGGKILYII), and 83-103 (FGNGFVIYGAIIGGALGIALC). Arginine 130 serves as a coordination point for a 1,2-diacyl-sn-glycero-3-phospho-(1'-sn-glycerol). 3 helical membrane-spanning segments follow: residues 142 to 162 (AETTSSIGIIFPADSLAPAGV), 164 to 184 (LYPTQIFSSIFDFALGLFLLW), and 221 to 241 (VGLLSTSQFISIFILIGGILL).

It belongs to the Lgt family.

It is found in the cell membrane. It carries out the reaction L-cysteinyl-[prolipoprotein] + a 1,2-diacyl-sn-glycero-3-phospho-(1'-sn-glycerol) = an S-1,2-diacyl-sn-glyceryl-L-cysteinyl-[prolipoprotein] + sn-glycerol 1-phosphate + H(+). Its pathway is protein modification; lipoprotein biosynthesis (diacylglyceryl transfer). Functionally, catalyzes the transfer of the diacylglyceryl group from phosphatidylglycerol to the sulfhydryl group of the N-terminal cysteine of a prolipoprotein, the first step in the formation of mature lipoproteins. The protein is Phosphatidylglycerol--prolipoprotein diacylglyceryl transferase 2 of Clostridium perfringens (strain 13 / Type A).